The primary structure comprises 380 residues: Glucose-1-phosphate adenylyltransferase (380 aa).

Alpha-D-glucose 1-phosphate-binding positions include glycine 164, 179 to 180 (EK), and serine 190.

Belongs to the bacterial/plant glucose-1-phosphate adenylyltransferase family. Homotetramer.

The enzyme catalyses alpha-D-glucose 1-phosphate + ATP + H(+) = ADP-alpha-D-glucose + diphosphate. It participates in glycan biosynthesis; glycogen biosynthesis. Functionally, involved in the biosynthesis of ADP-glucose, a building block required for the elongation reactions to produce glycogen. Catalyzes the reaction between ATP and alpha-D-glucose 1-phosphate (G1P) to produce pyrophosphate and ADP-Glc. This chain is Glucose-1-phosphate adenylyltransferase, found in Lactococcus lactis subsp. cremoris (strain MG1363).